The sequence spans 206 residues: Large ribosomal subunit protein uL4 (206 aa).

Belongs to the universal ribosomal protein uL4 family. As to quaternary structure, part of the 50S ribosomal subunit.

Functionally, one of the primary rRNA binding proteins, this protein initially binds near the 5'-end of the 23S rRNA. It is important during the early stages of 50S assembly. It makes multiple contacts with different domains of the 23S rRNA in the assembled 50S subunit and ribosome. Forms part of the polypeptide exit tunnel. This chain is Large ribosomal subunit protein uL4, found in Rhodopseudomonas palustris (strain HaA2).